Reading from the N-terminus, the 411-residue chain is S-adenosylmethionine synthase (411 aa).

Histidine 15 serves as a coordination point for ATP. Aspartate 17 provides a ligand contact to Mg(2+). Residue glutamate 43 participates in K(+) binding. Positions 56 and 99 each coordinate L-methionine. The interval glutamine 99 to threonine 109 is flexible loop. Residues aspartate 174–lysine 176, arginine 247–phenylalanine 248, aspartate 256, arginine 262–lysine 263, alanine 279, and lysine 283 contribute to the ATP site. Aspartate 256 serves as a coordination point for L-methionine. Lysine 287 serves as a coordination point for L-methionine.

This sequence belongs to the AdoMet synthase family. In terms of assembly, homotetramer; dimer of dimers. Mg(2+) is required as a cofactor. It depends on K(+) as a cofactor.

The protein localises to the cytoplasm. The enzyme catalyses L-methionine + ATP + H2O = S-adenosyl-L-methionine + phosphate + diphosphate. It participates in amino-acid biosynthesis; S-adenosyl-L-methionine biosynthesis; S-adenosyl-L-methionine from L-methionine: step 1/1. Functionally, catalyzes the formation of S-adenosylmethionine (AdoMet) from methionine and ATP. The overall synthetic reaction is composed of two sequential steps, AdoMet formation and the subsequent tripolyphosphate hydrolysis which occurs prior to release of AdoMet from the enzyme. This chain is S-adenosylmethionine synthase, found in Streptomyces spectabilis.